The sequence spans 535 residues: Ribonuclease Y (535 aa).

A helical transmembrane segment spans residues 4 to 24 (IILAMVCALIGLIIGYVAISM). The tract at residues 107–145 (TDRASSLDRKDENLSNKEKMLDSKEQSLTDKSRHINERE) is disordered. Positions 225-285 (TITTVHLPDD…IRREIARMTL (61 aa)) constitute a KH domain. The region spanning 351–444 (VLRHSVEVGK…VAAADALSSA (94 aa)) is the HD domain.

Belongs to the RNase Y family.

It is found in the cell membrane. In terms of biological role, endoribonuclease that initiates mRNA decay. This chain is Ribonuclease Y, found in Streptococcus agalactiae serotype Ia (strain ATCC 27591 / A909 / CDC SS700).